A 140-amino-acid polypeptide reads, in one-letter code: Large ribosomal subunit protein mL43 (140 aa).

Belongs to the mitochondrion-specific ribosomal protein mL43 family. Component of the mitochondrial large ribosomal subunit (mt-LSU). Mature yeast 74S mitochondrial ribosomes consist of a small (37S) and a large (54S) subunit. The 37S small subunit contains a 15S ribosomal RNA (15S mt-rRNA) and 34 different proteins. The 54S large subunit contains a 21S rRNA (21S mt-rRNA) and 46 different proteins.

It is found in the mitochondrion. Functionally, component of the mitochondrial ribosome (mitoribosome), a dedicated translation machinery responsible for the synthesis of mitochondrial genome-encoded proteins, including at least some of the essential transmembrane subunits of the mitochondrial respiratory chain. The mitoribosomes are attached to the mitochondrial inner membrane and translation products are cotranslationally integrated into the membrane. Also has an extraribosomal function, being essential for mitochondrial genome integrity. May interact with MHR1 to take part in the mtDNA repair mechanism. The sequence is that of Large ribosomal subunit protein mL43 (MRPL51) from Saccharomyces cerevisiae (strain ATCC 204508 / S288c) (Baker's yeast).